Reading from the N-terminus, the 362-residue chain is 3-dehydroquinate synthase (362 aa).

NAD(+) contacts are provided by residues 72-77 (DGEQYK), 106-110 (GVVGD), 130-131 (TT), Lys143, Lys152, and 170-173 (CLKT). 3 residues coordinate Zn(2+): Glu185, His248, and His265.

It belongs to the sugar phosphate cyclases superfamily. Dehydroquinate synthase family. Requires Co(2+) as cofactor. The cofactor is Zn(2+). It depends on NAD(+) as a cofactor.

Its subcellular location is the cytoplasm. It carries out the reaction 7-phospho-2-dehydro-3-deoxy-D-arabino-heptonate = 3-dehydroquinate + phosphate. Its pathway is metabolic intermediate biosynthesis; chorismate biosynthesis; chorismate from D-erythrose 4-phosphate and phosphoenolpyruvate: step 2/7. Catalyzes the conversion of 3-deoxy-D-arabino-heptulosonate 7-phosphate (DAHP) to dehydroquinate (DHQ). This chain is 3-dehydroquinate synthase, found in Aliivibrio salmonicida (strain LFI1238) (Vibrio salmonicida (strain LFI1238)).